A 206-amino-acid polypeptide reads, in one-letter code: Protein GrpE (206 aa).

It belongs to the GrpE family. In terms of assembly, homodimer.

Its subcellular location is the cytoplasm. In terms of biological role, participates actively in the response to hyperosmotic and heat shock by preventing the aggregation of stress-denatured proteins, in association with DnaK and GrpE. It is the nucleotide exchange factor for DnaK and may function as a thermosensor. Unfolded proteins bind initially to DnaJ; upon interaction with the DnaJ-bound protein, DnaK hydrolyzes its bound ATP, resulting in the formation of a stable complex. GrpE releases ADP from DnaK; ATP binding to DnaK triggers the release of the substrate protein, thus completing the reaction cycle. Several rounds of ATP-dependent interactions between DnaJ, DnaK and GrpE are required for fully efficient folding. The sequence is that of Protein GrpE from Psychromonas ingrahamii (strain DSM 17664 / CCUG 51855 / 37).